A 201-amino-acid chain; its full sequence is Holliday junction branch migration complex subunit RuvA (201 aa).

The tract at residues 1-64 is domain I; it reads MYEYIRGQFQ…EDFIGLYGFT (64 aa). The domain II stretch occupies residues 65 to 143; sequence TKEELEMFKL…PDELTSEEEQ (79 aa). The flexible linker stretch occupies residues 144-152; it reads LIEGINDNS. The domain III stretch occupies residues 153-201; that stretch reads DYSFNINETLSALMALGYTEKEAQKALEKVDKTLSIENMIKESLKLLMR.

It belongs to the RuvA family. As to quaternary structure, homotetramer. Forms an RuvA(8)-RuvB(12)-Holliday junction (HJ) complex. HJ DNA is sandwiched between 2 RuvA tetramers; dsDNA enters through RuvA and exits via RuvB. An RuvB hexamer assembles on each DNA strand where it exits the tetramer. Each RuvB hexamer is contacted by two RuvA subunits (via domain III) on 2 adjacent RuvB subunits; this complex drives branch migration. In the full resolvosome a probable DNA-RuvA(4)-RuvB(12)-RuvC(2) complex forms which resolves the HJ.

The protein localises to the cytoplasm. Functionally, the RuvA-RuvB-RuvC complex processes Holliday junction (HJ) DNA during genetic recombination and DNA repair, while the RuvA-RuvB complex plays an important role in the rescue of blocked DNA replication forks via replication fork reversal (RFR). RuvA specifically binds to HJ cruciform DNA, conferring on it an open structure. The RuvB hexamer acts as an ATP-dependent pump, pulling dsDNA into and through the RuvAB complex. HJ branch migration allows RuvC to scan DNA until it finds its consensus sequence, where it cleaves and resolves the cruciform DNA. In Clostridium perfringens (strain SM101 / Type A), this protein is Holliday junction branch migration complex subunit RuvA.